Consider the following 640-residue polypeptide: 1-deoxy-D-xylulose-5-phosphate synthase (640 aa).

Thiamine diphosphate is bound by residues His-75 and 117–119 (GHA). Residue Asp-146 coordinates Mg(2+). Thiamine diphosphate contacts are provided by residues 147–148 (AA), Asn-175, and Glu-370. Mg(2+) is bound at residue Asn-175.

This sequence belongs to the transketolase family. DXPS subfamily. In terms of assembly, homodimer. It depends on Mg(2+) as a cofactor. The cofactor is thiamine diphosphate.

The catalysed reaction is D-glyceraldehyde 3-phosphate + pyruvate + H(+) = 1-deoxy-D-xylulose 5-phosphate + CO2. The protein operates within metabolic intermediate biosynthesis; 1-deoxy-D-xylulose 5-phosphate biosynthesis; 1-deoxy-D-xylulose 5-phosphate from D-glyceraldehyde 3-phosphate and pyruvate: step 1/1. Functionally, catalyzes the acyloin condensation reaction between C atoms 2 and 3 of pyruvate and glyceraldehyde 3-phosphate to yield 1-deoxy-D-xylulose-5-phosphate (DXP). The chain is 1-deoxy-D-xylulose-5-phosphate synthase from Chlamydia trachomatis serovar A (strain ATCC VR-571B / DSM 19440 / HAR-13).